Consider the following 282-residue polypeptide: Elongation factor Ts (282 aa).

Residues Thr79–Val82 form an involved in Mg(2+) ion dislocation from EF-Tu region.

The protein belongs to the EF-Ts family.

The protein resides in the cytoplasm. In terms of biological role, associates with the EF-Tu.GDP complex and induces the exchange of GDP to GTP. It remains bound to the aminoacyl-tRNA.EF-Tu.GTP complex up to the GTP hydrolysis stage on the ribosome. This chain is Elongation factor Ts, found in Colwellia psychrerythraea (strain 34H / ATCC BAA-681) (Vibrio psychroerythus).